We begin with the raw amino-acid sequence, 376 residues long: Light-dependent chlorophyll f synthase (376 aa).

Positions 1–22 (MKLESDHVIATSDSSDYTSEPT) are disordered. Polar residues predominate over residues 11-22 (TSDSSDYTSEPT). A run of 5 helical transmembrane segments spans residues 51–68 (YVGWFGVLMIPCVLTAAT), 140–155 (HFLIGIIAYQDREWEL), 164–178 (WISLAFTAPVAASVS), 219–240 (LHQLGVIGVLGGAFAAAMHGSL), and 298–312 (FLAALPVAGIWSAAL). His140 lines the a chlorophyll pocket. An a chlorophyll-binding site is contributed by His220.

The protein belongs to the reaction center PufL/M/PsbA/D family. In terms of assembly, homodimer.

It is found in the cellular thylakoid membrane. Functionally, synthesizes chlorophyll f or chlorophyllide f (Chl f, 2-formyl chlorophyll a), probably by oxidation of chlorophyll a or chlorophyllide a and reduction of plastoquinone. The reaction is probably light-dependent. Chl f absorbs far red light (FRL, 707 nm in 100% methanol), and is synthesized when cells are grown in FRL, where it provides the advantage of extending the spectral range of harvested light in terrestrial cyanobacteria. When ectopically expressed in Synechococcus PCC 7002 (which does not grow in FRL and does not make Chl f) produces Chl f (0.059% of total chlorophyll). The protein is Light-dependent chlorophyll f synthase of Chlorogloeopsis fritschii (strain PCC 9212).